Reading from the N-terminus, the 144-residue chain is NADH-ubiquinone oxidoreductase chain 6 (144 aa).

Transmembrane regions (helical) follow at residues 1–21 (MVKVFFVLAVLSSIISYINID), 25–45 (SSFFLIFSLLFSMPVISMSMH), 46–66 (IWFSYFICLLFLSGIFVILVY), 79–99 (YMAVFLLLLSMLYFSPTVLTY), and 108–128 (FYYSIYWFIFCFILVCLLFFM).

This sequence belongs to the complex I subunit 6 family.

It is found in the mitochondrion membrane. The enzyme catalyses a ubiquinone + NADH + 5 H(+)(in) = a ubiquinol + NAD(+) + 4 H(+)(out). Functionally, core subunit of the mitochondrial membrane respiratory chain NADH dehydrogenase (Complex I) that is believed to belong to the minimal assembly required for catalysis. Complex I functions in the transfer of electrons from NADH to the respiratory chain. The immediate electron acceptor for the enzyme is believed to be ubiquinone. This chain is NADH-ubiquinone oxidoreductase chain 6, found in Caenorhabditis elegans.